Reading from the N-terminus, the 447-residue chain is Probable glycine dehydrogenase (decarboxylating) subunit 1 (447 aa).

This sequence belongs to the GcvP family. N-terminal subunit subfamily. As to quaternary structure, the glycine cleavage system is composed of four proteins: P, T, L and H. In this organism, the P 'protein' is a heterodimer of two subunits.

It carries out the reaction N(6)-[(R)-lipoyl]-L-lysyl-[glycine-cleavage complex H protein] + glycine + H(+) = N(6)-[(R)-S(8)-aminomethyldihydrolipoyl]-L-lysyl-[glycine-cleavage complex H protein] + CO2. Its function is as follows. The glycine cleavage system catalyzes the degradation of glycine. The P protein binds the alpha-amino group of glycine through its pyridoxal phosphate cofactor; CO(2) is released and the remaining methylamine moiety is then transferred to the lipoamide cofactor of the H protein. This Bacillus thuringiensis subsp. konkukian (strain 97-27) protein is Probable glycine dehydrogenase (decarboxylating) subunit 1.